We begin with the raw amino-acid sequence, 83 residues long: Small ribosomal subunit protein bS18 (83 aa).

This sequence belongs to the bacterial ribosomal protein bS18 family. Part of the 30S ribosomal subunit. Forms a tight heterodimer with protein bS6.

Functionally, binds as a heterodimer with protein bS6 to the central domain of the 16S rRNA, where it helps stabilize the platform of the 30S subunit. This is Small ribosomal subunit protein bS18 from Methylobacterium radiotolerans (strain ATCC 27329 / DSM 1819 / JCM 2831 / NBRC 15690 / NCIMB 10815 / 0-1).